Here is a 270-residue protein sequence, read N- to C-terminus: Putative [LysW]-aminoadipate/[LysW]-glutamate kinase (270 aa).

Substrate is bound by residues 42–43 (GG), Arg69, and Asn177.

This sequence belongs to the acetylglutamate kinase family. LysZ subfamily.

Its subcellular location is the cytoplasm. It carries out the reaction [amino-group carrier protein]-C-terminal-N-(1,4-dicarboxybutan-1-yl)-L-glutamine + ATP = [amino-group carrier protein]-C-terminal-N-(1-carboxy-5-phosphooxy-5-oxopentan-1-yl)-L-glutamine + ADP. It catalyses the reaction [amino-group carrier protein]-C-terminal-gamma-(L-glutamyl)-L-glutamate + ATP = [amino-group carrier protein]-C-terminal-gamma-(5-phospho-L-glutamyl)-L-glutamate + ADP. It participates in amino-acid biosynthesis; L-lysine biosynthesis via AAA pathway; L-lysine from L-alpha-aminoadipate (Thermus route): step 2/5. Its pathway is amino-acid biosynthesis; L-arginine biosynthesis. Functionally, involved in both the arginine and lysine biosynthetic pathways. Phosphorylates the LysW-bound precursors glutamate (for arginine biosynthesis), respectively alpha-aminoadipate (for lysine biosynthesis). This Aeropyrum pernix (strain ATCC 700893 / DSM 11879 / JCM 9820 / NBRC 100138 / K1) protein is Putative [LysW]-aminoadipate/[LysW]-glutamate kinase.